A 91-amino-acid chain; its full sequence is Probable Fe(2+)-trafficking protein (91 aa).

Belongs to the Fe(2+)-trafficking protein family. In terms of assembly, monomer.

Could be a mediator in iron transactions between iron acquisition and iron-requiring processes, such as synthesis and/or repair of Fe-S clusters in biosynthetic enzymes. The sequence is that of Probable Fe(2+)-trafficking protein from Klebsiella pneumoniae subsp. pneumoniae (strain ATCC 700721 / MGH 78578).